Reading from the N-terminus, the 61-residue chain is MAKTSWKVKANRAPKFKVRAYTRCQLCGRSHSVLRKFRICRICFRVLAHQGRIPGIKKASW.

Positions 24, 27, 40, and 43 each coordinate Zn(2+).

Belongs to the universal ribosomal protein uS14 family. Zinc-binding uS14 subfamily. In terms of assembly, part of the 30S ribosomal subunit. Contacts proteins S3 and S10. The cofactor is Zn(2+).

Its function is as follows. Binds 16S rRNA, required for the assembly of 30S particles and may also be responsible for determining the conformation of the 16S rRNA at the A site. This Mesomycoplasma hyopneumoniae (strain 232) (Mycoplasma hyopneumoniae) protein is Small ribosomal subunit protein uS14.